We begin with the raw amino-acid sequence, 956 residues long: Translation initiation factor IF-2 (956 aa).

Residues 68–357 are disordered; it reads APEAAAPKAP…GVSVPRGDGN (290 aa). Composition is skewed to low complexity over residues 86–123, 141–156, 164–175, and 212–235; these read AKPAEAQASVKPVETQAPATPAAAKAAATPVAPAAPAV, PGNNPFATSQGMPRAG, PAAAPASGAGRP, and GPRPAAGSGGPRPAAGSGGPRPAA. Gly residues-rich tracts occupy residues 236–257 and 276–324; these read GSGGPRPGAGSGASRPGGGGGN and RGAG…GAGR. Residues 325-334 are compositionally biased toward basic residues; that stretch reads GKQRKSKRAK. Positions 449–620 constitute a tr-type G domain; it reads ARPPVVTVMG…AVMLTADAAL (172 aa). Residues 458-465 are G1; the sequence is GHVDHGKT. Residue 458-465 coordinates GTP; sequence GHVDHGKT. A G2 region spans residues 483 to 487; the sequence is GITQH. The interval 508–511 is G3; that stretch reads DTPG. Residues 508–512 and 562–565 contribute to the GTP site; these read DTPGH and NKID. The segment at 562-565 is G4; the sequence is NKID. Residues 598–600 are G5; sequence SAR.

This sequence belongs to the TRAFAC class translation factor GTPase superfamily. Classic translation factor GTPase family. IF-2 subfamily.

Its subcellular location is the cytoplasm. Functionally, one of the essential components for the initiation of protein synthesis. Protects formylmethionyl-tRNA from spontaneous hydrolysis and promotes its binding to the 30S ribosomal subunits. Also involved in the hydrolysis of GTP during the formation of the 70S ribosomal complex. In Renibacterium salmoninarum (strain ATCC 33209 / DSM 20767 / JCM 11484 / NBRC 15589 / NCIMB 2235), this protein is Translation initiation factor IF-2.